The following is a 222-amino-acid chain: Cell division protein FtsQ (222 aa).

Over 1–5 (MNKKV) the chain is Cytoplasmic. Residues 6–26 (IAIVVGVVVVLVAILGVVAWF) traverse the membrane as a helical segment. Residues 27-222 (VPILKVGNIE…ISSPSMVTVR (196 aa)) lie on the Extracellular side of the membrane. The region spanning 30 to 98 (LKVGNIEVTG…STITVELTER (69 aa)) is the POTRA domain.

This sequence belongs to the FtsQ/DivIB family. FtsQ subfamily.

It is found in the cell membrane. Its function is as follows. Essential cell division protein. The protein is Cell division protein FtsQ of Corynebacterium glutamicum (strain ATCC 13032 / DSM 20300 / JCM 1318 / BCRC 11384 / CCUG 27702 / LMG 3730 / NBRC 12168 / NCIMB 10025 / NRRL B-2784 / 534).